A 169-amino-acid polypeptide reads, in one-letter code: Disulfide bond formation protein B 1 (169 aa).

Over 1-14 (MSDNTLYLRREKRF) the chain is Cytoplasmic. The helical transmembrane segment at 15 to 31 (LVLLGIICLALIGGALY) threads the bilayer. Residues 32-49 (MQIVLGEAPCPLCILQRY) are Periplasmic-facing. Cys41 and Cys44 form a disulfide bridge. Residues 50–64 (ALLFIAIFAFIGAAM) form a helical membrane-spanning segment. The Cytoplasmic portion of the chain corresponds to 65-71 (SGRRGVT). A helical membrane pass occupies residues 72–89 (VCETLVTLSALGGIAAAG). Over 90-144 (RHVWILAHPSDSCGIDVLQPIVDGLPLATLFPTGFQVSGFCTTPYPPVLGLSLAQ) the chain is Periplasmic. An intrachain disulfide couples Cys102 to Cys130. Residues 145–163 (WALAAFVLTAVLVPACIIR) traverse the membrane as a helical segment. Residues 164 to 169 (NRRKPY) lie on the Cytoplasmic side of the membrane.

The protein belongs to the DsbB family.

Its subcellular location is the cell inner membrane. Functionally, required for disulfide bond formation in some periplasmic proteins. Acts by oxidizing the DsbA protein. This chain is Disulfide bond formation protein B 1, found in Pseudomonas savastanoi pv. phaseolicola (strain 1448A / Race 6) (Pseudomonas syringae pv. phaseolicola (strain 1448A / Race 6)).